The primary structure comprises 313 residues: Ribonuclease HIII (313 aa).

Positions 94 to 310 (MSVIGSDEVG…TQKAKRLVER (217 aa)) constitute an RNase H type-2 domain. Positions 100, 101, and 205 each coordinate a divalent metal cation.

Belongs to the RNase HII family. RnhC subfamily. The cofactor is Mn(2+). Requires Mg(2+) as cofactor.

Its subcellular location is the cytoplasm. It catalyses the reaction Endonucleolytic cleavage to 5'-phosphomonoester.. Endonuclease that specifically degrades the RNA of RNA-DNA hybrids. In Bacillus velezensis (strain DSM 23117 / BGSC 10A6 / LMG 26770 / FZB42) (Bacillus amyloliquefaciens subsp. plantarum), this protein is Ribonuclease HIII.